Consider the following 486-residue polypeptide: F420-non-reducing hydrogenase iron-sulfur subunit A (486 aa).

Ni(2+)-binding residues include cysteine 61 and cysteine 64.

This sequence belongs to the [NiFe]/[NiFeSe] hydrogenase large subunit family. As to quaternary structure, the F420-non-reducing hydrogenase is composed of three subunits; MvhA, MvhD and MvhG. It forms a complex with the heterodisulfide reductase (Hdr). Ni(2+) serves as cofactor.

It localises to the cytoplasm. Its function is as follows. Part of a complex that provides reducing equivalents for heterodisulfide reductase. This Archaeoglobus profundus (strain DSM 5631 / JCM 9629 / NBRC 100127 / Av18) protein is F420-non-reducing hydrogenase iron-sulfur subunit A (mvhA).